Reading from the N-terminus, the 504-residue chain is L-amino-acid oxidase (504 aa).

The N-terminal stretch at 1 to 18 (MNVFFMFSLLFLAALGSC) is a signal peptide. Cys28 and Cys191 are disulfide-bonded. FAD-binding positions include 61–62 (MS), 81–82 (EA), Arg89, and 105–108 (GPMR). Arg108 provides a ligand contact to substrate. A glycan (N-linked (GlcNAc...) asparagine) is linked at Asn190. His241 provides a ligand contact to substrate. Val279 serves as a coordination point for FAD. A disulfide bond links Cys349 and Cys430. N-linked (GlcNAc...) asparagine glycosylation occurs at Asn379. Tyr390 contacts substrate. Residues Glu475 and 482 to 487 (GWIDST) each bind FAD. 482-483 (GW) is a binding site for substrate.

This sequence belongs to the flavin monoamine oxidase family. FIG1 subfamily. As to quaternary structure, homodimer; non-covalently linked. FAD serves as cofactor. As to expression, expressed by the venom gland.

It is found in the secreted. It carries out the reaction an L-alpha-amino acid + O2 + H2O = a 2-oxocarboxylate + H2O2 + NH4(+). It catalyses the reaction L-leucine + O2 + H2O = 4-methyl-2-oxopentanoate + H2O2 + NH4(+). Catalyzes an oxidative deamination of predominantly hydrophobic and aromatic L-amino acids, thus producing hydrogen peroxide that may contribute to the diverse toxic effects of this enzyme. Shows activity on L-Leu. Exhibits diverse biological activities, such as apoptosis, and inhibition of agonist- and shear stress-induced platelet aggregation (SIPA). Effects of snake L-amino oxidases on platelets are controversial, since they either induce aggregation or inhibit agonist-induced aggregation. These different effects are probably due to different experimental conditions. This protein may also induce hemorrhage, hemolysis, edema, antibacterial and antiparasitic activities. In Gloydius blomhoffii (Mamushi), this protein is L-amino-acid oxidase.